The sequence spans 312 residues: Porphobilinogen deaminase (312 aa).

Cys-241 is modified (S-(dipyrrolylmethanemethyl)cysteine).

It belongs to the HMBS family. As to quaternary structure, monomer. Dipyrromethane serves as cofactor.

The catalysed reaction is 4 porphobilinogen + H2O = hydroxymethylbilane + 4 NH4(+). The protein operates within porphyrin-containing compound metabolism; protoporphyrin-IX biosynthesis; coproporphyrinogen-III from 5-aminolevulinate: step 2/4. In terms of biological role, tetrapolymerization of the monopyrrole PBG into the hydroxymethylbilane pre-uroporphyrinogen in several discrete steps. This is Porphobilinogen deaminase from Trichlorobacter lovleyi (strain ATCC BAA-1151 / DSM 17278 / SZ) (Geobacter lovleyi).